The following is a 290-amino-acid chain: MSDSLHTPEEPRPGPGEQLAHAHDGSLRHTRAKGEPRFPDGPKADPAGSHFERRIRSFQPRRSRVTAGQADALQRLWPKWGLDIDGHALDLTELFGNTHPVVLEIGFGMGEATARMAAEDPDTGILAVDVHTPGQGNLLNLADQHGLTNIRVANGDAIILLREMLPPDSLDGLRVYFPDPWPKKRHHKRRLIQPEFLTLAATRLRPGALVHCATDWEPYAEQMLDVLTAHPDFENTQPTGGYAPRPGFRPLTRFEGQGLDKGHVVNDLLFRRVQPRDQHRDLPPSATEAD.

Composition is skewed to basic and acidic residues over residues 1–12 (MSDSLHTPEEPR) and 20–43 (AHAHDGSLRHTRAKGEPRFPDGPK). The segment at 1–49 (MSDSLHTPEEPRPGPGEQLAHAHDGSLRHTRAKGEPRFPDGPKADPAGS) is disordered. S-adenosyl-L-methionine-binding residues include Glu104, Asp129, Asp156, and Asp179. Asp179 is an active-site residue. Residues Lys183, Asp215, and 252 to 255 (TRFE) each bind substrate.

This sequence belongs to the class I-like SAM-binding methyltransferase superfamily. TrmB family.

It carries out the reaction guanosine(46) in tRNA + S-adenosyl-L-methionine = N(7)-methylguanosine(46) in tRNA + S-adenosyl-L-homocysteine. It participates in tRNA modification; N(7)-methylguanine-tRNA biosynthesis. In terms of biological role, catalyzes the formation of N(7)-methylguanine at position 46 (m7G46) in tRNA. This Streptomyces avermitilis (strain ATCC 31267 / DSM 46492 / JCM 5070 / NBRC 14893 / NCIMB 12804 / NRRL 8165 / MA-4680) protein is tRNA (guanine-N(7)-)-methyltransferase.